Here is a 184-residue protein sequence, read N- to C-terminus: Putative lyase MJ0807 (184 aa).

It belongs to the chorismate pyruvate-lyase type 2 family.

This chain is Putative lyase MJ0807, found in Methanocaldococcus jannaschii (strain ATCC 43067 / DSM 2661 / JAL-1 / JCM 10045 / NBRC 100440) (Methanococcus jannaschii).